The sequence spans 302 residues: 33 kDa chaperonin (302 aa).

Intrachain disulfides connect Cys240–Cys242 and Cys273–Cys276.

The protein belongs to the HSP33 family. In terms of processing, under oxidizing conditions two disulfide bonds are formed involving the reactive cysteines. Under reducing conditions zinc is bound to the reactive cysteines and the protein is inactive.

The protein localises to the cytoplasm. In terms of biological role, redox regulated molecular chaperone. Protects both thermally unfolding and oxidatively damaged proteins from irreversible aggregation. Plays an important role in the bacterial defense system toward oxidative stress. This Synechocystis sp. (strain ATCC 27184 / PCC 6803 / Kazusa) protein is 33 kDa chaperonin.